The sequence spans 408 residues: Sporulation integral membrane protein YlbJ (408 aa).

The next 8 membrane-spanning stretches (helical) occupy residues 6–26, 43–63, 81–101, 131–151, 214–234, 294–314, 324–344, and 377–397; these read INTL…ISHP, VVFP…GFGI, VPGV…PAGA, LFIF…GILL, VTSS…FSVF, IIVS…VAGI, PFFI…MLLW, and LLVQ…IIIF.

It is found in the cell membrane. Functionally, required for spore cortex formation. This Bacillus subtilis (strain 168) protein is Sporulation integral membrane protein YlbJ (ylbJ).